The following is a 649-amino-acid chain: MAGVSFSGHRLELLAAYEEVIREESAADWALYTYEDGSDDLKLAASGEGGLQELSGHFENQKVMYGFCSVKDSQAALPKYVLINWVGEDVPDARKCACASHVAKVAEFFQGVDVIVNASSVEDIDAGAIGQRLSNGLARLSSPVLHRLRLREDENAEPVGTTYQKTDAAVEMKRINREQFWEQAKKEEELRKEEERKKALDERLRFEQERMEQERQEQEERERRYREREQQIEEHRRKQQTLEAEEAKRRLKEQSIFGDHRDEEEETHMKKSESEVEEAAAIIAQRPDNPREFFKQQERVASASAGSCDVPSPFNHRPGSHLDSHRRMAPTPIPTRSPSDSSTASTPVAEQIERALDEVTSSQPPPLPPPPPPAQETQEPSPILDSEETRAAAPQAWAGPMEEPPQAQAPPRGPGSPAEDLMFMESAEQAVLAAPVEPATADATEIHDAADTIETDTATADTTVANNVPPAATSLIDLWPGNGEGASTLQGEPRAPTPPSGTEVTLAEVPLLDEVAPEPLLPAGEGCATLLNFDELPEPPATFCDPEEVEGESLAAPQTPTLPSALEELEQEQEPEPHLLTNGETTQKEGTQASEGYFSQSQEEEFAQSEELCAKAPPPVFYNKPPEIDITCWDADPVPEEEEGFEGGD.

At A2 the chain carries N-acetylalanine. The region spanning 3–134 (GVSFSGHRLE…DAGAIGQRLS (132 aa)) is the ADF-H domain. Residues S141 and S142 each carry the phosphoserine modification. Composition is skewed to basic and acidic residues over residues 208 to 236 (QERM…EEHR) and 288 to 298 (DNPREFFKQQE). Disordered regions lie at residues 208 to 420 (QERM…PAED), 477 to 502 (DLWP…PSGT), and 538 to 620 (EPPA…PPPV). Phosphothreonine is present on residues T331 and T335. The segment covering 334–348 (PTRSPSDSSTASTPV) has biased composition (polar residues). S337, S339, and S345 each carry phosphoserine. At T346 the chain carries Phosphothreonine. Residues 363 to 374 (QPPPLPPPPPPA) are compositionally biased toward pro residues. S416 carries the post-translational modification Phosphoserine. Position 497 is a phosphothreonine (T497). Residues 582-594 (NGETTQKEGTQAS) show a composition bias toward polar residues. Position 601 is a phosphoserine (S601).

As to quaternary structure, interacts with RUFY3. Interacts with CXCR4; this interaction is enhanced by antigenic stimulation. Interacts (via ADF-H domain) with ZMYND8 (via N-terminus); the interaction leads to sequestering of ZMYND8 in the cytoplasm. In terms of tissue distribution, expressed in the brain, with expression in the molecular layer of the dentate gyrus, stratum pyramidale, and stratum radiatum of the hippocampus (at protein level). Also expressed in the terminal varicosities distributed along dendritic trees of pyramidal cells in CA4 and CA3 of the hippocampus (at protein level). Expressed in pyramidal cells in CA2, CA1 and the subiculum of the hippocampus (at protein level). Expressed in peripheral blood lymphocytes, including T-cells (at protein level). Expressed in the brain. Expressed in the heart, placenta, lung, skeletal muscle, kidney, pancreas, skin fibroblasts, gingival fibroblasts and bone-derived cells.

The protein resides in the cytoplasm. The protein localises to the cell projection. It localises to the dendrite. It is found in the cell cortex. Its subcellular location is the cell junction. The protein resides in the growth cone. Functionally, actin cytoskeleton-organizing protein that plays a role in the formation of cell projections. Required for actin polymerization at immunological synapses (IS) and for the recruitment of the chemokine receptor CXCR4 to IS. Plays a role in dendritic spine morphogenesis and organization, including the localization of the dopamine receptor DRD1 to the dendritic spines. Involved in memory-related synaptic plasticity in the hippocampus. The chain is Drebrin (DBN1) from Homo sapiens (Human).